A 252-amino-acid polypeptide reads, in one-letter code: Chitooligosaccharide deacetylase (252 aa).

Mg(2+)-binding residues include H61 and H125.

It belongs to the YdjC deacetylase family. ChbG subfamily. In terms of assembly, homodimer. Mg(2+) serves as cofactor.

The protein resides in the cytoplasm. The enzyme catalyses N,N'-diacetylchitobiose + H2O = N-acetyl-beta-D-glucosaminyl-(1-&gt;4)-D-glucosamine + acetate. It carries out the reaction diacetylchitobiose-6'-phosphate + H2O = N'-monoacetylchitobiose-6'-phosphate + acetate. It functions in the pathway glycan degradation; chitin degradation. Its function is as follows. Involved in the degradation of chitin. ChbG is essential for growth on the acetylated chitooligosaccharides chitobiose and chitotriose but is dispensable for growth on cellobiose and chitosan dimer, the deacetylated form of chitobiose. Deacetylation of chitobiose-6-P and chitotriose-6-P is necessary for both the activation of the chb promoter by the regulatory protein ChbR and the hydrolysis of phosphorylated beta-glucosides by the phospho-beta-glucosidase ChbF. Catalyzes the removal of only one acetyl group from chitobiose-6-P to yield monoacetylchitobiose-6-P, the inducer of ChbR and the substrate of ChbF. This is Chitooligosaccharide deacetylase from Escherichia fergusonii (strain ATCC 35469 / DSM 13698 / CCUG 18766 / IAM 14443 / JCM 21226 / LMG 7866 / NBRC 102419 / NCTC 12128 / CDC 0568-73).